The primary structure comprises 131 residues: Glycine cleavage system H protein (131 aa).

In terms of domain architecture, Lipoyl-binding spans 24 to 106; sequence TVRVGITDYA…YGEGWLVELQ (83 aa). Lys65 is subject to N6-lipoyllysine.

Belongs to the GcvH family. In terms of assembly, the glycine cleavage system is composed of four proteins: P, T, L and H. The cofactor is (R)-lipoate.

The glycine cleavage system catalyzes the degradation of glycine. The H protein shuttles the methylamine group of glycine from the P protein to the T protein. In Mycolicibacterium gilvum (strain PYR-GCK) (Mycobacterium gilvum (strain PYR-GCK)), this protein is Glycine cleavage system H protein.